A 95-amino-acid chain; its full sequence is Cell division protein FtsB (95 aa).

The Cytoplasmic portion of the chain corresponds to 1 to 3 (MRL). A helical transmembrane segment spans residues 4–21 (FILILSAILLLFQYDLWF). Over 22–95 (GKNGYLDYKE…RIAKENKDNR (74 aa)) the chain is Periplasmic. Residues 28 to 62 (DYKETAEEIAMHKAENTKLSQRNQVVAAEIRDLKD) are a coiled coil.

This sequence belongs to the FtsB family. In terms of assembly, part of a complex composed of FtsB, FtsL and FtsQ.

Its subcellular location is the cell inner membrane. Its function is as follows. Essential cell division protein. May link together the upstream cell division proteins, which are predominantly cytoplasmic, with the downstream cell division proteins, which are predominantly periplasmic. In Mannheimia succiniciproducens (strain KCTC 0769BP / MBEL55E), this protein is Cell division protein FtsB.